Reading from the N-terminus, the 270-residue chain is Mediator of RNA polymerase II transcription subunit 4 (270 aa).

The segment at 1–25 is disordered; that stretch reads MAAASSGEKEKERPGGGLGAAGGNS. A2 is modified (N-acetylalanine). 2 coiled-coil regions span residues 24 to 48 and 90 to 131; these read NSTRERLLSALEDLEVLSRELIEML and HHEM…AKEK. S32 bears the Phosphoserine mark. Residues 231–270 are disordered; sequence MLPPNHSHDFLLEPPGHNKENEDDVEVMSTDSSSSSSDSD. Residues 236–250 are compositionally biased toward basic and acidic residues; sequence HSHDFLLEPPGHNKE. Residues 259–270 show a composition bias toward low complexity; that stretch reads STDSSSSSSDSD.

This sequence belongs to the Mediator complex subunit 4 family. Component of the Mediator complex, which is composed of MED1, MED4, MED6, MED7, MED8, MED9, MED10, MED11, MED12, MED13, MED13L, MED14, MED15, MED16, MED17, MED18, MED19, MED20, MED21, MED22, MED23, MED24, MED25, MED26, MED27, MED29, MED30, MED31, CCNC, CDK8 and CDC2L6/CDK11. The MED12, MED13, CCNC and CDK8 subunits form a distinct module termed the CDK8 module. Mediator containing the CDK8 module is less active than Mediator lacking this module in supporting transcriptional activation. Individual preparations of the Mediator complex lacking one or more distinct subunits have been variously termed ARC, CRSP, DRIP, PC2, SMCC and TRAP.

It is found in the nucleus. Functionally, component of the Mediator complex, a coactivator involved in the regulated transcription of nearly all RNA polymerase II-dependent genes. Mediator functions as a bridge to convey information from gene-specific regulatory proteins to the basal RNA polymerase II transcription machinery. Mediator is recruited to promoters by direct interactions with regulatory proteins and serves as a scaffold for the assembly of a functional preinitiation complex with RNA polymerase II and the general transcription factors. This is Mediator of RNA polymerase II transcription subunit 4 (MED4) from Bos taurus (Bovine).